A 455-amino-acid polypeptide reads, in one-letter code: Kynureninase (455 aa).

Pyridoxal 5'-phosphate-binding positions include leucine 94, threonine 95, 122–125, aspartate 208, histidine 211, and tyrosine 233; that span reads FPSD. The residue at position 234 (lysine 234) is an N6-(pyridoxal phosphate)lysine. Pyridoxal 5'-phosphate-binding residues include tryptophan 275 and asparagine 303.

The protein belongs to the kynureninase family. Homodimer. Requires pyridoxal 5'-phosphate as cofactor.

Its subcellular location is the cytoplasm. It carries out the reaction L-kynurenine + H2O = anthranilate + L-alanine + H(+). It catalyses the reaction 3-hydroxy-L-kynurenine + H2O = 3-hydroxyanthranilate + L-alanine + H(+). It functions in the pathway amino-acid degradation; L-kynurenine degradation; L-alanine and anthranilate from L-kynurenine: step 1/1. Its pathway is cofactor biosynthesis; NAD(+) biosynthesis; quinolinate from L-kynurenine: step 2/3. Its function is as follows. Catalyzes the cleavage of L-kynurenine (L-Kyn) and L-3-hydroxykynurenine (L-3OHKyn) into anthranilic acid (AA) and 3-hydroxyanthranilic acid (3-OHAA), respectively. This is Kynureninase from Vanderwaltozyma polyspora (strain ATCC 22028 / DSM 70294 / BCRC 21397 / CBS 2163 / NBRC 10782 / NRRL Y-8283 / UCD 57-17) (Kluyveromyces polysporus).